Consider the following 52-residue polypeptide: Large ribosomal subunit protein bL33 (52 aa).

This sequence belongs to the bacterial ribosomal protein bL33 family.

The polypeptide is Large ribosomal subunit protein bL33 (rpmG) (Chlamydia muridarum (strain MoPn / Nigg)).